The sequence spans 89 residues: Small ribosomal subunit protein uS15 (89 aa).

The protein belongs to the universal ribosomal protein uS15 family. In terms of assembly, part of the 30S ribosomal subunit. Forms a bridge to the 50S subunit in the 70S ribosome, contacting the 23S rRNA.

In terms of biological role, one of the primary rRNA binding proteins, it binds directly to 16S rRNA where it helps nucleate assembly of the platform of the 30S subunit by binding and bridging several RNA helices of the 16S rRNA. Functionally, forms an intersubunit bridge (bridge B4) with the 23S rRNA of the 50S subunit in the ribosome. In Staphylococcus aureus (strain JH1), this protein is Small ribosomal subunit protein uS15.